Here is an 886-residue protein sequence, read N- to C-terminus: Putative respiratory burst oxidase homolog protein H (886 aa).

Disordered regions lie at residues 1 to 46 and 64 to 103; these read MKSN…KKNA and WRKS…TTSS. Topologically, residues 1–316 are cytoplasmic; that stretch reads MKSNTPTEDS…AELMHENWKK (316 aa). Positions 64–78 are enriched in polar residues; it reads WRKSGNLGSPSTRKS. EF-hand-like stretches follow at residues 137-145 and 171-183; these read SVDGKLPKE and RQIE…DKEQ. EF-hand domains follow at residues 195 to 230 and 239 to 274; these read DLDC…SASA and NAAA…MVTN. Residues D208, N210, D212, K214, and E219 each contribute to the Ca(2+) site. At S283 the chain carries Phosphoserine. A helical membrane pass occupies residues 317–337; the sequence is LWVLALWAIINVYLFMWKYEE. Residues 338-404 are Extracellular-facing; that stretch reads FMRNPLYNIT…INFHKVIAYM (67 aa). The Ferric oxidoreductase domain occupies 355-512; sequence KGAAETLKLN…LLVLAYILLI (158 aa). The chain crosses the membrane as a helical span at residues 405–421; the sequence is IAFQALLHTALHIFCNY. Over 422–456 the chain is Cytoplasmic; sequence PRLSSCSYDVFLTYAGAALGNTQPSYLGLMLTSVS. The chain crosses the membrane as a helical span at residues 457–477; that stretch reads ITGVLMIFFMGFSFTLAMHYF. Residues 478-499 lie on the Extracellular side of the membrane; sequence RRNIVKLPKPFNVLAGFNAFWY. The helical transmembrane segment at 500-520 threads the bilayer; it reads AHHLLVLAYILLIIHGYYLII. Residues 521–528 are Cytoplasmic-facing; it reads EKPWYQKT. A helical transmembrane segment spans residues 529–546; sequence TWMYLAVPMLFYASERLF. Residues 547 to 688 lie on the Extracellular side of the membrane; sequence SRLLQEHSHR…PYGAPAQNYQ (142 aa). The 135-residue stretch at 552–686 folds into the FAD-binding FR-type domain; it reads EHSHRVNVIK…KGPYGAPAQN (135 aa). The chain crosses the membrane as a helical span at residues 689–709; sequence KFDILLLVGLGIGATPFISIL. The Cytoplasmic portion of the chain corresponds to 710–886; that stretch reads KDMLNHLKPG…TRFTFHKENF (177 aa).

Belongs to the RBOH (TC 5.B.1.3) family. Monomer and homodimer.

It localises to the membrane. Functionally, calcium-dependent NADPH oxidase that generates superoxide. This is Putative respiratory burst oxidase homolog protein H (RBOHH) from Arabidopsis thaliana (Mouse-ear cress).